A 233-amino-acid polypeptide reads, in one-letter code: Cell surface glycoprotein gp42 (233 aa).

The first 16 residues, 1–16, serve as a signal peptide directing secretion; sequence MLLWMVLLLCVSMTEA. 2 Ig-like domains span residues 23–98 and 115–195; these read PVLS…GTIQ and PVLT…RDIS. 3 N-linked (GlcNAc...) asparagine glycosylation sites follow: Asn29, Asn66, and Asn181. 2 disulfide bridges follow: Cys40/Cys88 and Cys136/Cys184. Gly206 is lipidated: GPI-anchor amidated glycine. Positions 207–233 are cleaved as a propeptide — removed in mature form; it reads TASMKSTTVVIWLPVSCLVGWPWLLRF.

In terms of tissue distribution, NK cells.

The protein localises to the cell membrane. The sequence is that of Cell surface glycoprotein gp42 from Rattus norvegicus (Rat).